A 156-amino-acid chain; its full sequence is Succinate dehydrogenase [ubiquinone] cytochrome b small subunit 1, mitochondrial (156 aa).

The transit peptide at 1 to 25 directs the protein to the mitochondrion; the sequence is MLSAVRRAIPLSARILRTSLIQRCA. At 26 to 59 the chain is on the mitochondrial matrix side; sequence GATSAAVTGAAPPQFDPIAAEKGFKPLHSHGTLF. A helical membrane pass occupies residues 60 to 78; the sequence is KIERYFAAAMVPLIPAAYF. The Mitochondrial intermembrane segment spans residues 79-83; it reads IHGRE. Residues 84–104 traverse the membrane as a helical segment; sequence MDLCLALALTLHVHWGVWGVV. H95 is a heme b binding site. Topologically, residues 105 to 119 are mitochondrial matrix; sequence NDYGRPFVLGDTLAA. An a rhodoquinol-binding site is contributed by Y107. The chain crosses the membrane as a helical span at residues 120–141; sequence AVRVGAYIFTACLLAGLLYFNE. Residues 142 to 156 are Mitochondrial intermembrane-facing; sequence HDVGLTRAFEMVWEL.

The protein belongs to the CybS family. In terms of assembly, component of the mitochondrial electron transport chain complex II composed of four subunits: a flavoprotein (Fp), an iron-sulfur protein (Ip), and a large cytochrome b (CybL) subunit and a small cytochrome b (CybS) subunit. There are 2 developmental stage-specific forms of complex II which have the Ip and CybL subunits in common. Complex II from the free-living larvae (aerobic environment) acts as a succinate dehydrogenase and is composed of the common subunit Ip and CybL and the stage specific subunits FpL and CybSL. Complex II from parasitic larvae and adults (anaerobic environment) acts as a fumarate reductase and is composed of the common subunit Ip and CybL and the stage specific subunits FpA and CybSA. Requires heme b as cofactor. As to expression, expressed in adult muscles (at protein level).

It localises to the mitochondrion inner membrane. In terms of biological role, membrane-bound small subunit (CybS) of the mitochondrial electron transport chain complex II, which together with the membrane-bound large subunit (CybL), anchor the catalytic subunits to the inner mitochondria membrane. During the parasitic larvae and adult stages, which occur in an anaerobic environment, complex II acts as a fumarate reductase by transferring electrons from rhodoquinol to fumarate. This Ascaris suum (Pig roundworm) protein is Succinate dehydrogenase [ubiquinone] cytochrome b small subunit 1, mitochondrial.